We begin with the raw amino-acid sequence, 247 residues long: UPF0280 protein MMP1236 (247 aa).

The protein belongs to the UPF0280 family.

This Methanococcus maripaludis (strain DSM 14266 / JCM 13030 / NBRC 101832 / S2 / LL) protein is UPF0280 protein MMP1236.